A 78-amino-acid polypeptide reads, in one-letter code: Short neurotoxin OH-26 (78 aa).

Residues 1-21 (MKNLLLTFLVVTIVCLDLGYT) form the signal peptide. 4 disulfide bridges follow: C24–C40, C33–C58, C62–C70, and C71–C76.

Belongs to the three-finger toxin family. Short-chain subfamily. Expressed by the venom gland.

The protein resides in the secreted. In terms of biological role, this three-finger toxin binds and inhibits the nicotinic acetylcholine receptor (nAChR). This chain is Short neurotoxin OH-26, found in Ophiophagus hannah (King cobra).